The sequence spans 219 residues: Small ribosomal subunit protein uS3c (219 aa).

Residues 43 to 118 (IKNYVQKNMK…KLNIAITRIA (76 aa)) enclose the KH type-2 domain.

This sequence belongs to the universal ribosomal protein uS3 family. As to quaternary structure, part of the 30S ribosomal subunit.

It is found in the plastid. The protein localises to the chloroplast. This chain is Small ribosomal subunit protein uS3c (rps3), found in Panax ginseng (Korean ginseng).